A 256-amino-acid chain; its full sequence is Trans-aconitate 2-methyltransferase (256 aa).

Belongs to the methyltransferase superfamily. Tam family.

It is found in the cytoplasm. The catalysed reaction is trans-aconitate + S-adenosyl-L-methionine = (E)-3-(methoxycarbonyl)pent-2-enedioate + S-adenosyl-L-homocysteine. Functionally, catalyzes the S-adenosylmethionine monomethyl esterification of trans-aconitate. The chain is Trans-aconitate 2-methyltransferase from Rhodopseudomonas palustris (strain BisB18).